The following is a 435-amino-acid chain: Asparagine--tRNA ligase (435 aa).

Belongs to the class-II aminoacyl-tRNA synthetase family. In terms of assembly, homodimer.

The protein localises to the cytoplasm. The enzyme catalyses tRNA(Asn) + L-asparagine + ATP = L-asparaginyl-tRNA(Asn) + AMP + diphosphate + H(+). This is Asparagine--tRNA ligase from Leptospira borgpetersenii serovar Hardjo-bovis (strain JB197).